Consider the following 142-residue polypeptide: Hemoglobin subunit beta-C (142 aa).

The 142-residue stretch at 1 to 142 (MPNKALITGF…VASALAHRYH (142 aa)) folds into the Globin domain. Heme b-binding residues include histidine 59 and histidine 88.

This sequence belongs to the globin family. Heterotetramer of two alpha chains and two beta chains. Red blood cells.

Involved in oxygen transport from the lung to the various peripheral tissues. In Capra hircus (Goat), this protein is Hemoglobin subunit beta-C (HBBC).